Reading from the N-terminus, the 665-residue chain is Chaperone protein dnaK1 (665 aa).

Position 198 is a phosphothreonine; by autocatalysis (Thr198). The interval 634 to 665 (DDPWDNQMNSNSRNSRYGNSRDDDPWDNDYFL) is disordered. Positions 642–651 (NSNSRNSRYG) are enriched in low complexity.

Belongs to the heat shock protein 70 family.

Acts as a chaperone. The polypeptide is Chaperone protein dnaK1 (dnaK1) (Prochlorococcus marinus subsp. pastoris (strain CCMP1986 / NIES-2087 / MED4)).